Reading from the N-terminus, the 131-residue chain is Large ribosomal subunit protein bL17 (131 aa).

It belongs to the bacterial ribosomal protein bL17 family. Part of the 50S ribosomal subunit. Contacts protein L32.

The sequence is that of Large ribosomal subunit protein bL17 from Shewanella violacea (strain JCM 10179 / CIP 106290 / LMG 19151 / DSS12).